The following is a 399-amino-acid chain: Argininosuccinate synthase (399 aa).

Position 8–16 (A8–S16) interacts with ATP. Y87 serves as a coordination point for L-citrulline. G117 contributes to the ATP binding site. 3 residues coordinate L-aspartate: T119, N123, and D124. Residue N123 coordinates L-citrulline. The L-citrulline site is built by R127, S175, E260, and Y272.

The protein belongs to the argininosuccinate synthase family. Type 1 subfamily. In terms of assembly, homotetramer.

The protein localises to the cytoplasm. It catalyses the reaction L-citrulline + L-aspartate + ATP = 2-(N(omega)-L-arginino)succinate + AMP + diphosphate + H(+). The protein operates within amino-acid biosynthesis; L-arginine biosynthesis; L-arginine from L-ornithine and carbamoyl phosphate: step 2/3. This chain is Argininosuccinate synthase, found in Rhodococcus erythropolis (strain PR4 / NBRC 100887).